A 263-amino-acid polypeptide reads, in one-letter code: Hydroxyethylthiazole kinase 1 (263 aa).

A substrate-binding site is contributed by M42. Residues K118 and T164 each coordinate ATP. G191 is a substrate binding site.

The protein belongs to the Thz kinase family. The cofactor is Mg(2+).

It catalyses the reaction 5-(2-hydroxyethyl)-4-methylthiazole + ATP = 4-methyl-5-(2-phosphooxyethyl)-thiazole + ADP + H(+). It participates in cofactor biosynthesis; thiamine diphosphate biosynthesis; 4-methyl-5-(2-phosphoethyl)-thiazole from 5-(2-hydroxyethyl)-4-methylthiazole: step 1/1. Its function is as follows. Catalyzes the phosphorylation of the hydroxyl group of 4-methyl-5-beta-hydroxyethylthiazole (THZ). This Clostridium botulinum (strain Okra / Type B1) protein is Hydroxyethylthiazole kinase 1.